The chain runs to 437 residues: Minor fimbrial subunit HifE (437 aa).

Positions Met1 to Ala30 are cleaved as a signal peptide.

Belongs to the fimbrial protein family.

It is found in the fimbrium. May be a minor structural protein required for pilus biogenesis. May be the adhesive component in the pili. The sequence is that of Minor fimbrial subunit HifE (hifE) from Haemophilus influenzae.